Consider the following 340-residue polypeptide: Anthranilate phosphoribosyltransferase (340 aa).

5-phospho-alpha-D-ribose 1-diphosphate is bound by residues G82, 85-86 (GD), T90, 92-95 (NIST), 110-118 (KHGSRSVSS), and S122. Residue G82 participates in anthranilate binding. S94 contacts Mg(2+). R168 contacts anthranilate. Residues D227 and E228 each coordinate Mg(2+).

The protein belongs to the anthranilate phosphoribosyltransferase family. In terms of assembly, homodimer. Mg(2+) serves as cofactor.

It catalyses the reaction N-(5-phospho-beta-D-ribosyl)anthranilate + diphosphate = 5-phospho-alpha-D-ribose 1-diphosphate + anthranilate. The protein operates within amino-acid biosynthesis; L-tryptophan biosynthesis; L-tryptophan from chorismate: step 2/5. Its function is as follows. Catalyzes the transfer of the phosphoribosyl group of 5-phosphorylribose-1-pyrophosphate (PRPP) to anthranilate to yield N-(5'-phosphoribosyl)-anthranilate (PRA). This is Anthranilate phosphoribosyltransferase from Hydrogenovibrio crunogenus (strain DSM 25203 / XCL-2) (Thiomicrospira crunogena).